Consider the following 129-residue polypeptide: Phosphoribosyl-AMP cyclohydrolase (129 aa).

Aspartate 86 is a Mg(2+) binding site. Cysteine 87 is a Zn(2+) binding site. The Mg(2+) site is built by aspartate 88 and aspartate 90. Zn(2+)-binding residues include cysteine 104 and cysteine 111.

It belongs to the PRA-CH family. Homodimer. It depends on Mg(2+) as a cofactor. Zn(2+) is required as a cofactor.

It is found in the cytoplasm. The enzyme catalyses 1-(5-phospho-beta-D-ribosyl)-5'-AMP + H2O = 1-(5-phospho-beta-D-ribosyl)-5-[(5-phospho-beta-D-ribosylamino)methylideneamino]imidazole-4-carboxamide. Its pathway is amino-acid biosynthesis; L-histidine biosynthesis; L-histidine from 5-phospho-alpha-D-ribose 1-diphosphate: step 3/9. In terms of biological role, catalyzes the hydrolysis of the adenine ring of phosphoribosyl-AMP. This Ignicoccus hospitalis (strain KIN4/I / DSM 18386 / JCM 14125) protein is Phosphoribosyl-AMP cyclohydrolase.